Here is a 166-residue protein sequence, read N- to C-terminus: MSSYARRTPVRTVLNFCTAIRQIITGEAGSVAADKGNRGQKRAPLLHRHRLHAWLYLGSAITTEVTGTVILDFSEGFQLPAQTTAAMALYAFSFFLLTRALRAVPLSVAYATWSGLGTVAVAFAGAIIHGEAVTLGRITAITAVIGGIVILNLATTRQHSARRKDV.

4 helical membrane-spanning segments follow: residues 51–71 (LHAWLYLGSAITTEVTGTVIL), 77–97 (FQLPAQTTAAMALYAFSFFLL), 108–128 (VAYATWSGLGTVAVAFAGAII), and 133–153 (VTLGRITAITAVIGGIVILNL).

The protein belongs to the drug/metabolite transporter (DMT) superfamily. Small multidrug resistance (SMR) (TC 2.A.7.1) family. NepA/NepB subfamily. In terms of assembly, the efflux pump is composed of NepA and NepB.

Its subcellular location is the cell membrane. Component of an efflux pump responsible for the transport of nicotine breakdown products, in particular methylamine, out of the cell. This pump apparently serves as a metabolic valve for nicotine catabolites and may protect the bacteria from the potentially toxic side effects of these compounds. This is Nicotine metabolites export pump subunit NepB (nepB) from Paenarthrobacter nicotinovorans (Arthrobacter nicotinovorans).